The chain runs to 837 residues: Outer membrane usher protein HifC (837 aa).

A signal peptide spans 1–26 (MKTKIFPLNKIAFACSLLLANPLAWA). C813 and C833 are joined by a disulfide.

This sequence belongs to the fimbrial export usher family.

Its subcellular location is the cell outer membrane. In terms of biological role, essential for piliation. In Haemophilus influenzae, this protein is Outer membrane usher protein HifC (hifC).